A 201-amino-acid polypeptide reads, in one-letter code: Orotidine 5'-phosphate decarboxylase (201 aa).

Substrate contacts are provided by residues Asp-8, Lys-26, 52–61 (DLKFCDIPST), Thr-106, Arg-153, Gln-161, Gly-180, and Arg-181. Residue Lys-54 is the Proton donor of the active site.

Belongs to the OMP decarboxylase family. Type 1 subfamily. As to quaternary structure, homodimer.

It catalyses the reaction orotidine 5'-phosphate + H(+) = UMP + CO2. Its pathway is pyrimidine metabolism; UMP biosynthesis via de novo pathway; UMP from orotate: step 2/2. Catalyzes the decarboxylation of orotidine 5'-monophosphate (OMP) to uridine 5'-monophosphate (UMP). The polypeptide is Orotidine 5'-phosphate decarboxylase (pyrF) (Thermotoga maritima (strain ATCC 43589 / DSM 3109 / JCM 10099 / NBRC 100826 / MSB8)).